A 494-amino-acid chain; its full sequence is UDP-N-acetylmuramoyl-L-alanyl-D-glutamate--L-lysine ligase (494 aa).

Ser30 is a binding site for UDP-N-acetyl-alpha-D-muramoyl-L-alanyl-D-glutamate. 110 to 116 contributes to the ATP binding site; it reads GTNGKTS. UDP-N-acetyl-alpha-D-muramoyl-L-alanyl-D-glutamate-binding positions include 152–153, Ser179, and Arg187; that span reads TT. Lys219 carries the N6-carboxylysine modification. The L-lysine recognition motif signature appears at 406-409; sequence DNPA.

The protein belongs to the MurCDEF family. MurE subfamily. Post-translationally, carboxylation is probably crucial for Mg(2+) binding and, consequently, for the gamma-phosphate positioning of ATP.

The protein localises to the cytoplasm. It carries out the reaction UDP-N-acetyl-alpha-D-muramoyl-L-alanyl-D-glutamate + L-lysine + ATP = UDP-N-acetyl-alpha-D-muramoyl-L-alanyl-gamma-D-glutamyl-L-lysine + ADP + phosphate + H(+). It functions in the pathway cell wall biogenesis; peptidoglycan biosynthesis. Catalyzes the addition of L-lysine to the nucleotide precursor UDP-N-acetylmuramoyl-L-alanyl-D-glutamate (UMAG) in the biosynthesis of bacterial cell-wall peptidoglycan. The chain is UDP-N-acetylmuramoyl-L-alanyl-D-glutamate--L-lysine ligase from Staphylococcus epidermidis (strain ATCC 35984 / DSM 28319 / BCRC 17069 / CCUG 31568 / BM 3577 / RP62A).